The following is a 431-amino-acid chain: Tyrosine--tRNA ligase (431 aa).

Position 33 (Tyr-33) interacts with L-tyrosine. A 'HIGH' region motif is present at residues 38-47 (PTADSLHIGS). The L-tyrosine site is built by Tyr-172 and Gln-176. The short motif at 234 to 238 (KFGKS) is the 'KMSKS' region element. Lys-237 contacts ATP. The S4 RNA-binding domain maps to 364–431 (INIVEVLNEK…KKNYFVLNVK (68 aa)).

The protein belongs to the class-I aminoacyl-tRNA synthetase family. TyrS type 1 subfamily. Homodimer.

The protein localises to the cytoplasm. The enzyme catalyses tRNA(Tyr) + L-tyrosine + ATP = L-tyrosyl-tRNA(Tyr) + AMP + diphosphate + H(+). Catalyzes the attachment of tyrosine to tRNA(Tyr) in a two-step reaction: tyrosine is first activated by ATP to form Tyr-AMP and then transferred to the acceptor end of tRNA(Tyr). The sequence is that of Tyrosine--tRNA ligase from Flavobacterium psychrophilum (strain ATCC 49511 / DSM 21280 / CIP 103535 / JIP02/86).